Reading from the N-terminus, the 49-residue chain is Venom peptide 3 (49 aa).

The N-terminal stretch at 1-23 (MRFTFVLVIAATVAVLGFFGINA) is a signal peptide. 2 AXPX repeats span residues 23–26 (AEPM) and 31–34 (AEPY). Residues 24-37 (EPMPDPHAEPYPDA) constitute a propeptide that is removed on maturation. L48 carries the leucine amide modification.

Expressed by the venom gland.

It localises to the secreted. The polypeptide is Venom peptide 3 (Eumenes pomiformis (Potter wasp)).